Reading from the N-terminus, the 1127-residue chain is Cellulose synthase-like protein D1 (1127 aa).

A disordered region spans residues 1–24 (MASKGILKNGGKPPTAPSSAAPTV). A run of 2 helical transmembrane segments spans residues 262-282 (VISP…LFLM) and 292-312 (AIWL…SWVL). Catalysis depends on residues aspartate 392 and aspartate 828. 6 consecutive transmembrane segments (helical) span residues 910–930 (VFLI…QFIV), 936–956 (TFLT…MLEI), 982–1002 (LAAV…SFTL), 1025–1045 (SLMI…AVGF), 1059–1079 (LLGG…FAKG), and 1089–1109 (TIVY…WIAI).

The protein belongs to the glycosyltransferase 2 family. Plant cellulose synthase-like D subfamily.

The protein resides in the golgi apparatus membrane. Functionally, thought to be a Golgi-localized beta-glycan synthase that polymerize the backbones of noncellulosic polysaccharides (hemicelluloses) of plant cell wall. This chain is Cellulose synthase-like protein D1 (CSLD1), found in Oryza sativa subsp. indica (Rice).